We begin with the raw amino-acid sequence, 150 residues long: Large ribosomal subunit protein bL9 (150 aa).

This sequence belongs to the bacterial ribosomal protein bL9 family.

Functionally, binds to the 23S rRNA. The chain is Large ribosomal subunit protein bL9 from Shewanella woodyi (strain ATCC 51908 / MS32).